The following is a 144-amino-acid chain: UPF0292 protein MA_4098 (144 aa).

The Toprim domain occupies 28 to 109 (GAVIIVEGKR…KPELQIRNKL (82 aa)). Residues E34, D78, and D80 each contribute to the Mg(2+) site.

Belongs to the UPF0292 family. The cofactor is Mg(2+).

The chain is UPF0292 protein MA_4098 from Methanosarcina acetivorans (strain ATCC 35395 / DSM 2834 / JCM 12185 / C2A).